The chain runs to 495 residues: Rho GTPase-activating protein 19 (495 aa).

Residues 98–304 (MSLKRKEKGV…FMIKHSQKLF (207 aa)) enclose the Rho-GAP domain. Disordered regions lie at residues 327–362 (KDDL…ETQQ) and 393–495 (KHPS…SSSL). Composition is skewed to basic and acidic residues over residues 350–362 (SRLD…ETQQ), 433–452 (QERK…KENV), and 470–481 (KSLEGQKEESCR).

In terms of biological role, GTPase activator for the Rho-type GTPases by converting them to an inactive GDP-bound state. The polypeptide is Rho GTPase-activating protein 19 (ARHGAP19) (Gallus gallus (Chicken)).